Consider the following 185-residue polypeptide: Vomeronasal secretory protein 2 (185 aa).

The signal sequence occupies residues 1–19 (MKSLLLTVTLSSLVATLQT). C80 and C172 are oxidised to a cystine.

It belongs to the calycin superfamily. Lipocalin family. As to expression, specifically expressed in vomeronasal and posterior glands of the nasal septum, the ducts of which open into the lumen of the vomeronasal organ.

Its subcellular location is the secreted. Functionally, transport of lipophilic molecules, possible pheromone-carrier. In Mus musculus (Mouse), this protein is Vomeronasal secretory protein 2 (Lcn4).